The chain runs to 124 residues: Thioredoxin domain-containing protein C21C3.12c (124 aa).

One can recognise a Thioredoxin domain in the interval P37–I124. C39 functions as the Nucleophile in the catalytic mechanism.

This sequence belongs to the thioredoxin family.

The protein localises to the cytoplasm. It localises to the nucleus. In Schizosaccharomyces pombe (strain 972 / ATCC 24843) (Fission yeast), this protein is Thioredoxin domain-containing protein C21C3.12c.